Here is a 1042-residue protein sequence, read N- to C-terminus: Protein phosphatase Slingshot homolog 1 (1042 aa).

The span at 1–12 (MALVTLQRSPTP) shows a compositional bias: polar residues. Positions 1–29 (MALVTLQRSPTPSAASSSASNSELEAGSD) are disordered. Alanine 2 is subject to N-acetylalanine. A compositionally biased stretch (low complexity) spans 13-22 (SAASSSASNS). Serine 37 and serine 57 each carry phosphoserine. Residues 249-304 (ERTERLIKAKLRSIMMSQDLENVTSKEIRNELEKQMNCNLKEFKEFIDNEMLLILG) form the DEK-C domain. Positions 308–449 (KPSLIFDHLY…LSEYEGILDA (142 aa)) constitute a Tyrosine-protein phosphatase domain. Catalysis depends on cysteine 393, which acts as the Phosphocysteine intermediate. At serine 516 the chain carries Phosphoserine. 4 disordered regions span residues 576-609 (FGNSKPRSDSLPQVEELEKDGSPRTGRWRRASTQ), 668-766 (MERH…PHCD), 858-900 (IPEE…LDHT), and 915-942 (PTSSSISSNLTRSSSSDSIHSVRGKPGL). The span at 675–693 (SSSAICTQPTFLPHVTSSP) shows a compositional bias: polar residues. Low complexity predominate over residues 697-712 (ASSRSRAPERPASGPA). Over residues 886–900 (LQKSPTSTLPRLDHT) the composition is skewed to polar residues. Serine 889 is subject to Phosphoserine. The tract at residues 889–1042 (SPTSTLPRLD…LKSPSRVNKS (154 aa)) is interaction with YWHAG. Positions 917–935 (SSSISSNLTRSSSSDSIHS) are enriched in low complexity. Residue serine 970 is modified to Phosphoserine. Polar residues predominate over residues 985–995 (SSEADTSTIAD). A disordered region spans residues 985 to 1042 (SSEADTSTIADSQDAKCGLSSSFLPEPQSAPRDPAATSKSSGKSAPEHLKSPSRVNKS).

It belongs to the protein-tyrosine phosphatase family. As to quaternary structure, interacts with the 14-3-3 proteins YWHAB, YWHAG, YWHAQ, and YWHAZ. Interaction with 14-3-3 proteins inhibits phosphatase activity and also blocks recruitment to lamellipodia and stimulation by actin. Interacts with actin and this stimulates phosphatase activity. Interacts with LIMK1. Phosphorylated. Inhibitory phosphorylation by PAK4 promotes binding to YWHAZ. Phosphorylation at Ser-970 is decreased by stimuli which promote actin reorganization and lamellipodia formation. Can be dephosphorylated and activated by PPP3CA/calcineurin A. Phosphorylation decreases immediately prior to telophase. As to expression, expressed in brain, heart, kidney and thymus. Also expressed at lower levels in liver, skeletal muscle, small intestine and spleen.

Its subcellular location is the cytoplasm. The protein localises to the cytoskeleton. It is found in the cleavage furrow. The protein resides in the midbody. The enzyme catalyses O-phospho-L-tyrosyl-[protein] + H2O = L-tyrosyl-[protein] + phosphate. It carries out the reaction O-phospho-L-seryl-[protein] + H2O = L-seryl-[protein] + phosphate. It catalyses the reaction O-phospho-L-threonyl-[protein] + H2O = L-threonyl-[protein] + phosphate. Functionally, protein phosphatase which regulates actin filament dynamics. Dephosphorylates and activates the actin binding/depolymerizing factor cofilin, which subsequently binds to actin filaments and stimulates their disassembly. Inhibitory phosphorylation of cofilin is mediated by LIMK1, which may also be dephosphorylated and inactivated by this protein. In Mus musculus (Mouse), this protein is Protein phosphatase Slingshot homolog 1.